Reading from the N-terminus, the 190-residue chain is MTPEQCEFIAGNEWIQINPQFNLDELHLICGDIGPFEAGMPIWVPLWIAVTLRKRRKCTIIPPQWLCVEELKKLVIAESGTNAFGQVPRFYLEIAHMFVQYAKEDLPDSDMIRVYVQDLWDKRSAKLNNSSTKFLGQVESCHARMDNITLMEVAYIKRSLITASREIEALNKSFHELSSQNSSDQRYVIA.

It belongs to the GINS2/PSF2 family. As to quaternary structure, component of the GINS complex which is a heterotetramer of gins1, gins2, gins3 and gins4.

Its subcellular location is the nucleus. In terms of biological role, the GINS complex plays an essential role in the initiation of DNA replication. This Brugia malayi (Filarial nematode worm) protein is Probable DNA replication complex GINS protein PSF2.